A 195-amino-acid polypeptide reads, in one-letter code: Imidazole glycerol phosphate synthase subunit HisH (195 aa).

Positions 1 to 193 (MIAIVDYGVG…RETTCNSTQQ (193 aa)) constitute a Glutamine amidotransferase type-1 domain. Catalysis depends on Cys-78, which acts as the Nucleophile. Active-site residues include His-168 and Glu-170.

In terms of assembly, heterodimer of HisH and HisF.

The protein localises to the cytoplasm. It carries out the reaction 5-[(5-phospho-1-deoxy-D-ribulos-1-ylimino)methylamino]-1-(5-phospho-beta-D-ribosyl)imidazole-4-carboxamide + L-glutamine = D-erythro-1-(imidazol-4-yl)glycerol 3-phosphate + 5-amino-1-(5-phospho-beta-D-ribosyl)imidazole-4-carboxamide + L-glutamate + H(+). The enzyme catalyses L-glutamine + H2O = L-glutamate + NH4(+). Its pathway is amino-acid biosynthesis; L-histidine biosynthesis; L-histidine from 5-phospho-alpha-D-ribose 1-diphosphate: step 5/9. IGPS catalyzes the conversion of PRFAR and glutamine to IGP, AICAR and glutamate. The HisH subunit catalyzes the hydrolysis of glutamine to glutamate and ammonia as part of the synthesis of IGP and AICAR. The resulting ammonia molecule is channeled to the active site of HisF. The polypeptide is Imidazole glycerol phosphate synthase subunit HisH (Exiguobacterium sibiricum (strain DSM 17290 / CCUG 55495 / CIP 109462 / JCM 13490 / 255-15)).